Reading from the N-terminus, the 270-residue chain is SAMP-activating enzyme E1 (270 aa).

ATP contacts are provided by residues Gly-42, Asp-63, 70-74, and Lys-87; that span reads SNLQR. Residue Lys-113 forms a Glycyl lysine isopeptide (Lys-Gly) (interchain with G-Cter in SAMP2) linkage. 131 to 132 contacts ATP; sequence DN. The Zn(2+) site is built by Cys-171 and Cys-174. The active-site Glycyl thioester intermediate is the Cys-188. 2 residues coordinate Zn(2+): Cys-245 and Cys-248.

The protein belongs to the HesA/MoeB/ThiF family. Interacts with NcsA. Zn(2+) is required as a cofactor. In terms of processing, sampylated at Lys-113 with the archaeal ubiquitin-like protein SAMP2. Also sampylated with SAMP1.

It catalyses the reaction [small archaeal modifier protein]-C-terminal Gly-Gly + ATP + H(+) = [small archaeal modifier protein]-C-terminal Gly-Gly-AMP + diphosphate. In terms of biological role, likely activates multiple ubiquitin-like SAMPs for protein conjugation as well as for sulfur transfer, via ATP-dependent adenylation at their C-terminus. In fact, it is required for the formation of all three SAMP1-, SAMP2- and SAMP3-protein conjugates, and for molybdenum cofactor (MoCo) biosynthesis and thiolation of tRNAs. The polypeptide is SAMP-activating enzyme E1 (ubaA) (Haloferax volcanii (strain ATCC 29605 / DSM 3757 / JCM 8879 / NBRC 14742 / NCIMB 2012 / VKM B-1768 / DS2) (Halobacterium volcanii)).